The primary structure comprises 482 residues: Glutamate--tRNA ligase (482 aa).

Residues 9–19 (PSPTGPIHVGN) carry the 'HIGH' region motif. Residues cysteine 106, cysteine 108, cysteine 133, and aspartate 135 each coordinate Zn(2+). The 'KMSKS' region signature appears at 250–254 (KLSKR). An ATP-binding site is contributed by lysine 253.

The protein belongs to the class-I aminoacyl-tRNA synthetase family. Glutamate--tRNA ligase type 1 subfamily. As to quaternary structure, monomer. The cofactor is Zn(2+).

It localises to the cytoplasm. The catalysed reaction is tRNA(Glu) + L-glutamate + ATP = L-glutamyl-tRNA(Glu) + AMP + diphosphate. In terms of biological role, catalyzes the attachment of glutamate to tRNA(Glu) in a two-step reaction: glutamate is first activated by ATP to form Glu-AMP and then transferred to the acceptor end of tRNA(Glu). The polypeptide is Glutamate--tRNA ligase (Symbiobacterium thermophilum (strain DSM 24528 / JCM 14929 / IAM 14863 / T)).